Reading from the N-terminus, the 175-residue chain is ATP synthase subunit b (175 aa).

The chain crosses the membrane as a helical span at residues 19–39 (LVVGTIAFALLVFVLLKFVMP).

Belongs to the ATPase B chain family. In terms of assembly, F-type ATPases have 2 components, F(1) - the catalytic core - and F(0) - the membrane proton channel. F(1) has five subunits: alpha(3), beta(3), gamma(1), delta(1), epsilon(1). F(0) has three main subunits: a(1), b(2) and c(10-14). The alpha and beta chains form an alternating ring which encloses part of the gamma chain. F(1) is attached to F(0) by a central stalk formed by the gamma and epsilon chains, while a peripheral stalk is formed by the delta and b chains.

The protein localises to the cell membrane. Its function is as follows. F(1)F(0) ATP synthase produces ATP from ADP in the presence of a proton or sodium gradient. F-type ATPases consist of two structural domains, F(1) containing the extramembraneous catalytic core and F(0) containing the membrane proton channel, linked together by a central stalk and a peripheral stalk. During catalysis, ATP synthesis in the catalytic domain of F(1) is coupled via a rotary mechanism of the central stalk subunits to proton translocation. Functionally, component of the F(0) channel, it forms part of the peripheral stalk, linking F(1) to F(0). This chain is ATP synthase subunit b, found in Salinispora tropica (strain ATCC BAA-916 / DSM 44818 / JCM 13857 / NBRC 105044 / CNB-440).